A 607-amino-acid chain; its full sequence is Elongation factor 4 (607 aa).

Residues 11–193 (KNIRNFSIIA…KIVEVVPPPE (183 aa)) form the tr-type G domain. GTP is bound by residues 23–28 (DHGKST) and 140–143 (NKID).

Belongs to the TRAFAC class translation factor GTPase superfamily. Classic translation factor GTPase family. LepA subfamily.

It is found in the cell membrane. It carries out the reaction GTP + H2O = GDP + phosphate + H(+). Required for accurate and efficient protein synthesis under certain stress conditions. May act as a fidelity factor of the translation reaction, by catalyzing a one-codon backward translocation of tRNAs on improperly translocated ribosomes. Back-translocation proceeds from a post-translocation (POST) complex to a pre-translocation (PRE) complex, thus giving elongation factor G a second chance to translocate the tRNAs correctly. Binds to ribosomes in a GTP-dependent manner. The sequence is that of Elongation factor 4 from Staphylococcus saprophyticus subsp. saprophyticus (strain ATCC 15305 / DSM 20229 / NCIMB 8711 / NCTC 7292 / S-41).